The sequence spans 117 residues: uncharacterized protein (117 aa).

This is an uncharacterized protein from Escherichia coli O157:H7.